A 388-amino-acid polypeptide reads, in one-letter code: Succinate--CoA ligase [ADP-forming] subunit beta (388 aa).

Residues 9 to 244 enclose the ATP-grasp domain; the sequence is KQLFKEFGLP…PSQDDAREAE (236 aa). ATP-binding positions include Lys46, 53-55, Glu99, Thr102, and Glu107; that span reads GRG. The Mg(2+) site is built by Asn199 and Asp213. Residues Asn264 and 321–323 contribute to the substrate site; that span reads GIV.

The protein belongs to the succinate/malate CoA ligase beta subunit family. As to quaternary structure, heterotetramer of two alpha and two beta subunits. Mg(2+) is required as a cofactor.

The catalysed reaction is succinate + ATP + CoA = succinyl-CoA + ADP + phosphate. It catalyses the reaction GTP + succinate + CoA = succinyl-CoA + GDP + phosphate. Its pathway is carbohydrate metabolism; tricarboxylic acid cycle; succinate from succinyl-CoA (ligase route): step 1/1. Succinyl-CoA synthetase functions in the citric acid cycle (TCA), coupling the hydrolysis of succinyl-CoA to the synthesis of either ATP or GTP and thus represents the only step of substrate-level phosphorylation in the TCA. The beta subunit provides nucleotide specificity of the enzyme and binds the substrate succinate, while the binding sites for coenzyme A and phosphate are found in the alpha subunit. The sequence is that of Succinate--CoA ligase [ADP-forming] subunit beta from Idiomarina loihiensis (strain ATCC BAA-735 / DSM 15497 / L2-TR).